Here is a 315-residue protein sequence, read N- to C-terminus: Small ribosomal subunit protein uS9m (315 aa).

The N-terminal 42 residues, 1–42 (MMASLRHSITSALRSSRQGCSKSAQWQSLDQQFGALRISSRS), are a transit peptide targeting the mitochondrion. Positions 293–315 (PRKVERKKHGHVKARKMPTWVKR) are disordered. Over residues 296 to 315 (VERKKHGHVKARKMPTWVKR) the composition is skewed to basic residues.

It belongs to the universal ribosomal protein uS9 family. As to quaternary structure, component of the mitochondrial small ribosomal subunit (mt-SSU). Mature N.crassa 74S mitochondrial ribosomes consist of a small (37S) and a large (54S) subunit. The 37S small subunit contains a 16S ribosomal RNA (16S mt-rRNA) and 32 different proteins. The 54S large subunit contains a 23S rRNA (23S mt-rRNA) and 42 different proteins.

The protein resides in the mitochondrion. Component of the mitochondrial ribosome (mitoribosome), a dedicated translation machinery responsible for the synthesis of mitochondrial genome-encoded proteins, including at least some of the essential transmembrane subunits of the mitochondrial respiratory chain. The mitoribosomes are attached to the mitochondrial inner membrane and translation products are cotranslationally integrated into the membrane. This is Small ribosomal subunit protein uS9m (mrp-9) from Neurospora crassa (strain ATCC 24698 / 74-OR23-1A / CBS 708.71 / DSM 1257 / FGSC 987).